The sequence spans 586 residues: MIVMIIKNLFVCNSQEILKEYKFNAVGVNIILGEKREDHEETNGVGKSTMIECISFLLGKTISNFYTTNEILLNKNVFIVLNVEIDGNQVFLARSFNSPKHGYTLHDTSLTFNLEEWKKVSISVYKKFIEKEILKGEKEDITFAALREYIIRDEKTGFNDIVLPNRGGLKQYKLLNYLFTLPTHTEKNIKVFRDKIEKLNSEIKLIESMNINIGDLKVKEDELINEIEDYNRVIYQTKTANKYNNDTNRYSEIKSELNKIQNEIFENEHICKQYQRNIDDLNKKVTKIKELENIEKFYEDIVGFFPEEVKQNYNKVQEFYNFMVESRGSYFKDKIVKIQADLKKLNIKKQGLTEQLESSARILKSNNFIEDISIVMEEQRRKEIELAEVRLRISDYDKKNHIFDKINELQHEILRVNSMYYDEFQSYSAIVSELKKLFNNLMDVTYNQHGFLDFEYDNRISNAKQSTTGRIKISCSIPDERSHGRLHMKINIFDLTWFLYRCINKCSLNILIHDGSYSNPDPHVKGTLLKHINSSLLENRIGQYFVTINKNELLLDDLQELESKGMIVAKLDRNNEDKNRFFGFRF.

2 coiled-coil regions span residues 183 to 293 (THTE…ELEN) and 331 to 400 (FKDK…DKKN).

This is an uncharacterized protein from Bacillus subtilis (strain 168).